Here is a 266-residue protein sequence, read N- to C-terminus: Protein crossbronx-like (266 aa).

The 164-residue stretch at 15 to 178 folds into the UBC core domain; sequence KQGYHILAEY…VQEQAILSRN (164 aa). The disordered stretch occupies residues 234 to 266; that stretch reads SSRQLDEEEANQVEKLHRGRIPEHQREESEVSL. The span at 245-266 shows a compositional bias: basic and acidic residues; sequence QVEKLHRGRIPEHQREESEVSL.

Belongs to the ubiquitin-conjugating enzyme family. FTS subfamily.

The polypeptide is Protein crossbronx-like (Drosophila melanogaster (Fruit fly)).